A 551-amino-acid polypeptide reads, in one-letter code: Protein MTL1 (551 aa).

An N-terminal signal peptide occupies residues 1–35; the sequence is MASCNPTRKKSSASSLSMWRTILMALTTLPLSVLS. Residues 36–361 lie on the Extracellular side of the membrane; that stretch reads QELVPANSTT…HSGLSKKNRN (326 aa). Disordered regions lie at residues 108–143, 206–227, and 243–263; these read MQVS…IISS, PSSS…SYSS, and SSSS…SSSS. The chain crosses the membrane as a helical span at residues 362-382; it reads IIIGCVVGIGAPLILILLILI. Over 383–551 the chain is Cytoplasmic; sequence YMFCVQPKKT…PNNGLNITNY (169 aa). Positions 429–513 are disordered; that stretch reads SSDSPIGSNN…SNSNSQDYND (85 aa). Over residues 430 to 441 the composition is skewed to polar residues; that stretch reads SDSPIGSNNIQN. Over residues 466-477 the composition is skewed to acidic residues; sequence GYDDDDDDDAND. Residues Ser-481 and Ser-482 each carry the phosphoserine modification. The segment covering 498–508 has biased composition (low complexity); it reads SASYSMSNSNS.

Belongs to the MID2 like cell wall stress sensor family.

The protein resides in the membrane. Functionally, involved in cell integrity signaling during vegetative growth at elevated temperature. Acts positively on the PKC1-MAPK pathway. Cell membrane sensor of oxidative stress in the cell integrity pathway upstream of PKC1. Required to transmit the oxidative signal to SLT2 and to restore the correct actin organization following oxidative stress. Multicopy suppressor of 1,3-beta-glucan synthase (GS) mutation. Also suppresses RGD1 null mutations. This is Protein MTL1 (MTL1) from Saccharomyces cerevisiae (strain ATCC 204508 / S288c) (Baker's yeast).